Here is a 150-residue protein sequence, read N- to C-terminus: Clitocypin (150 aa).

It belongs to the protease inhibitor I48 family. Homodimer. In terms of tissue distribution, uniformly expressed throughout the mature fruiting body (at mRNA and protein level).

In terms of biological role, binds and inhibits cysteine proteinases. Inhibits most strongly papain and cathepsin L, more weakly bromelain and cathepsin B while it is completely ineffective against cathepsin H. The polypeptide is Clitocypin (Cnc1) (Clitocybe nebularis (Clouded agaric)).